The following is a 321-amino-acid chain: NADPH-dependent codeinone reductase 1-2 (321 aa).

Residues threonine 27 and aspartate 51 each coordinate NADPH. Residues tyrosine 56 and histidine 119 each act as proton donor in the active site. Substrate is bound at residue histidine 119. NADPH is bound by residues serine 165, glutamine 187, serine 214, leucine 216, serine 264, and arginine 269. The interval 299 to 321 is disordered; the sequence is SADFLLSPTGPFKTEEEFWDEKD.

This sequence belongs to the aldo/keto reductase family. In terms of tissue distribution, latex secreting cells (laticifer cells). Expressed constitutively in all organs with highest levels in capsules. Restricted to the parietal region of sieve elements adjacent or proximal to laticifers in roots, stems, leaves and carpels.

The protein localises to the cytoplasm. The protein resides in the cytosol. It catalyses the reaction codeine + NADP(+) = codeinone + NADPH + H(+). The catalysed reaction is neopine + NADP(+) = neopinone + NADPH + H(+). The enzyme catalyses morphine + NADP(+) = morphinone + NADPH + H(+). It carries out the reaction neomorphine + NADP(+) = neomorphinone + NADPH + H(+). It functions in the pathway alkaloid biosynthesis; morphine biosynthesis. Functionally, NADPH-dependent codeinone reductase involved in biosynthesis of morphinan-type benzylisoquinoline and opiate alkaloids natural products. Reduces codeinone to codeine in the penultimate step in morphine biosynthesis. Can use morphinone, hydrocodone and hydromorphone as substrate during reductive reaction with NADPH as cofactor, and morphine and dihydrocodeine as substrate during oxidative reaction with NADP as cofactor. Converts morphinone to morphine, and neomorphinone to neomorphine. Reduces irreversibly neopinone, a spontaneous isomer of codeinone, to neopine; in planta, neopine levels are limited to low levels. In Papaver somniferum (Opium poppy), this protein is NADPH-dependent codeinone reductase 1-2.